Here is a 216-residue protein sequence, read N- to C-terminus: Large ribosomal subunit protein uL24m (216 aa).

Residues 1 to 9 (MRLSALLAL) constitute a mitochondrion transit peptide. Serine 24 carries the phosphoserine modification. The KOW domain maps to 56-89 (LFCGDMVEILEGKDAGKQGKVVQVVRQRNWVVLE).

Belongs to the universal ribosomal protein uL24 family. As to quaternary structure, component of the mitochondrial ribosome large subunit (39S) which comprises a 16S rRNA and about 50 distinct proteins.

The protein resides in the mitochondrion. The chain is Large ribosomal subunit protein uL24m (Mrpl24) from Mus musculus (Mouse).